Consider the following 2070-residue polypeptide: MELAHSLLLNEEALAQITEAKRPVFIFEWLRFLDKVLVAANKTDVKEKQKKLVEQLTGLISSSPGPPTRKLLAKNLAALYSIGDTYTVFQTLDKCNDIIRSKDDTAAYLPTKLAAVACVGAFYEKMGRMLGSAFPETVNNLLKSLKSAESQGRSEILMSLQKVLTGLGGAAASSHRDIYKNARSLLTDRSMAVRCAVAKCLLELQNEAVFMWTAELENVATLCFKALENSNYGVRVAVSKLLGTVMATALMPKQATVMRQNVKRATFDEVLELMATGFLRGGSGFLKSGGEMLKVGGSVNREVRVGVTQAYVVFVTTLGGQWLERSFATFLSHVLDLVSHPRATQTHVDAVYSRRCVSFMLRATVGSLLGEKAQIAAAKEICQAIGKQMKAVEAVVNDTSSENKSGTADIAASQHVMVCALQELGSLVQSLNATASPLIQEASIGLLEIVTSVLLHPSMAARLAAAWCLRCVAVALPFQLTPFLDRCAERLNNLKTSPEAVSGYSFAMAALLGGVHQCPLGIPHAKGKMVVSIAEDLLRTAAQNSRLSLQRTQAGWLLLGALMTLGPSVVRYHLPKMLLLWRNVFPRSLKELEAEKARGDSFTWQVTLEGRAGALCAMRSFVAHCPELLTEDAIRKLMTPIECAMTMMSHIPSVIKAHGAHLKASAAMVRLRLYDILALLPPKTYEGSFNALLRELVAEFTLTDNSANTTTSLLRSLCHYDDSVLLGSWLQETDHKSIEDQLQPNSASGSGALEHDPSSIYLRIPAGEAVPGPLPLGVSVIDASVALFGVVFPHVSYKHRLQMLDHFAECVKQAKGVRQQAVQLNIFTAVLSALKGLAENKSTLGPEEVRKSALTLVMGALDNPNPILRCAAGEALGRMAQVVGEASFIARMAQYSFDKLKSARDVVSRTGHSLALGCLHRYVGGIGSGQHLKTSVSILLALAQDGTSPEVQTWSLHSLALIVDSSGPMYRGYVEPTLSLVLTLLLTVPPSHTEVHQCLGRCLGAIITTVGPELQGNAATISTIRSSCLVGCAITQDHSDSLVQAAAISCLQQLHMFAPRHVNLSSLVPSLCVHLCSSHLLLRRAAVACLRQLAQREAAEVCEYAMSLAKNAGDKEISGGNVNPFTPGVSSRSDVHCRHQGVNITDTGLEGLLFGMLDRETDRKLCSDIHDTLGHMLSSLAVEKLSHWLMLCKDVLAASSDMSAATLLSSGKDEESEKKDEMDDDAMFTTLGEEDKSKPFVAPRWATRVFAADCLCRIINLCENSDQAHFDLALARSAKLRNPKNDLLVLHLSDLIRMAFMAATDHSNQLRMAGLQALEDIIKKFASVPEPEFPGHVILEQYQANVGAALRPAFSQDTPSDIIAKACQVCSTWIGSGVVSDLNDLRRVHNLLVSSLDTVQAGKGSSSQLYRESATTMEKLAVLKAWAEVYVVAMNIKKEAESKPKRAMNNPDDDDDDYGTIDELPPDSLITLVQPELPTLSRLWLAALKDYALLTLPAEFSSQLPPDGGAFYTPETIDTARLHYRNSWAPILHAVALWLNSTGFISQESTEATTVSGVQKRSPAVSLNQVPGAMASAKPLPEVNKDRMHLILGVSIQFLCSPRPEEPIEHVTACLQALHTLLGSPYARIHIAEDQLIGVELLSVLHRLLLTWNPPSIQLLVTGVVQQIVRAAQDYLQEKRNALNEEDMEKESCPTLGEGGDTGGLIPGKSLVFATMELLMFILVRHMPHLSTKMLDSPSHTAMKTQLSEESARLVAATVAILSDLPSLCSPAGCMTILPTILFLIARILKDTAIKSADNQVPPPVSAALQGIKSIVTLSMAKTEDTQKQWTTLIRSTLACILEYSQPDDCMPAPDEVSTLTAIALFLWSASSEIIGVQSLQNGCMNRFKSALNSCDPWVQAKCYQLLLSVFQHSNRALSTPYIHSLAPLVVGKLKAVERHRPASSTELLAVQEGIKVLETLVALGEEQNRVQLLALLVPTLISYLLDENSFASASSISKDLHEFALQNLMHIGPLYPHAFKTVMGAAPELKARLETAVRASQASKAKAAARQPAPTTHSTPTIKLKTSFF.

HEAT repeat units lie at residues 848–885 (EVRK…VVGE), 1062–1099 (VNLS…REAA), and 1290–1327 (LHLS…KFAS). Residue Ser-1737 is modified to Phosphoserine.

It belongs to the HEATR5 family. In terms of assembly, self-associates. Component of the aftiphilin/p200/gamma-synergin complex, at least composed of AFTPH/aftiphilin, HEATR5B/p200a and SYNRG/gamma-synergin, which plays a role in the AP1G1/AP-1-mediated protein trafficking from early to recycling endosomes and between the trans-Golgi network (TGN) and endosomes. Within the complex interacts with AFTPH/aftiphilin and SYNRG/gamma-synergin; the interactions are direct. Interacts with GGA1.

The protein localises to the cytoplasm. Its subcellular location is the perinuclear region. The protein resides in the cytoplasmic vesicle. It localises to the clathrin-coated vesicle. In terms of biological role, component of clathrin-coated vesicles. Component of the aftiphilin/p200/gamma-synergin complex, which plays roles in AP1G1/AP-1-mediated protein trafficking including the trafficking of transferrin from early to recycling endosomes, and the membrane trafficking of furin and the lysosomal enzyme cathepsin D between the trans-Golgi network (TGN) and endosomes. This is HEAT repeat-containing protein 5B (Heatr5b) from Mus musculus (Mouse).